Consider the following 503-residue polypeptide: Transcription termination/antitermination protein NusA (503 aa).

The S1 motif domain occupies 139 to 203 (GDIINGIVKR…KGPQIFLSRV (65 aa)). The KH domain maps to 308 to 378 (SHKVEVVVSQ…LDVEEVIGQL (71 aa)).

The protein belongs to the NusA family. In terms of assembly, monomer. Binds directly to the core enzyme of the DNA-dependent RNA polymerase and to nascent RNA.

It localises to the cytoplasm. Participates in both transcription termination and antitermination. In Rickettsia prowazekii (strain Madrid E), this protein is Transcription termination/antitermination protein NusA.